The sequence spans 24 residues: Superoxide dismutase [Cu-Zn], chloroplastic (24 aa).

This sequence belongs to the Cu-Zn superoxide dismutase family. As to quaternary structure, homodimer. Cu cation serves as cofactor. Requires Zn(2+) as cofactor.

The protein resides in the plastid. The protein localises to the chloroplast. The enzyme catalyses 2 superoxide + 2 H(+) = H2O2 + O2. In terms of biological role, destroys radicals which are normally produced within the cells and which are toxic to biological systems. This chain is Superoxide dismutase [Cu-Zn], chloroplastic, found in Picea abies (Norway spruce).